The primary structure comprises 364 residues: TD and POZ domain-containing protein 2 (364 aa).

An MATH domain is found at 19–149; the sequence is EFCYEWTISN…KDKLTLCCKV (131 aa). Residues 188-255 enclose the BTB domain; that stretch reads TDCSLLVAGH…IYTGKAPTLH (68 aa).

This sequence belongs to the Tdpoz family.

The chain is TD and POZ domain-containing protein 2 from Mus musculus (Mouse).